The chain runs to 222 residues: Protein CicA (222 aa).

The sequence is that of Protein CicA (cicA) from Caulobacter vibrioides (strain ATCC 19089 / CIP 103742 / CB 15) (Caulobacter crescentus).